Reading from the N-terminus, the 235-residue chain is Claudin-16 (235 aa).

Topologically, residues 1-3 (MKD) are cytoplasmic. A helical transmembrane segment spans residues 4–24 (LLQYAACFLAIFSTGFLIVAT). Over 25-79 (RTDCWMVNADDSLEVSTKCRGLWWECVTNAFDGIRTCDEYDSIYAEHPLKLVVTR) the chain is Extracellular. A helical transmembrane segment spans residues 80–100 (ALMITADILAGFGFITLLLGL). At 101–115 (DCVKFLPDEPHIKVR) the chain is on the cytoplasmic side. The chain crosses the membrane as a helical span at residues 116–136 (LCFVAGTVLLIAGTPGIIGSV). The Extracellular portion of the chain corresponds to 137 to 169 (WYAVDVYVERSSLVLHNIFLGIQYKFGWSCWLG). A helical transmembrane segment spans residues 170 to 190 (MAGSLGCFLAGALLTCCLYLF). Residues 191-235 (KDVGPERNYPYAMRKPYSTAGVSMAKSYKAPRTETAKMYAVDTRV) lie on the Cytoplasmic side of the membrane. An Interaction with TJP1 motif is present at residues 233–235 (TRV).

The protein belongs to the claudin family. In terms of assembly, can form heteropolymeric tight junction strands with other claudins. Interacts with CLDN19. Interacts (via PDZ-binding motif TRV) with TJP1 (via PDZ domain). Cannot form tight junction strands on its own.

It localises to the cell junction. The protein resides in the tight junction. Its subcellular location is the cell membrane. It catalyses the reaction Mg(2+)(in) = Mg(2+)(out). The enzyme catalyses Ca(2+)(in) = Ca(2+)(out). The catalysed reaction is Na(+)(in) = Na(+)(out). It carries out the reaction K(+)(in) = K(+)(out). It catalyses the reaction Rb(+)(in) = Rb(+)(out). The enzyme catalyses Cs(+)(in) = Cs(+)(out). The catalysed reaction is Li(+)(in) = Li(+)(out). Functionally, forms paracellular channels: coassembles with CLDN19 into tight junction strands with cation-selective channels through the strands, conveying epithelial permeability in a process known as paracellular tight junction permeability. Involved in the maintenance of ion gradients along the nephron. In the thick ascending limb (TAL) of Henle's loop, facilitates sodium paracellular permeability from the interstitial compartment to the lumen, contributing to the lumen-positive transepithelial potential that drives paracellular magnesium and calcium reabsorption. This chain is Claudin-16, found in Rattus norvegicus (Rat).